A 149-amino-acid chain; its full sequence is Transthyretin (149 aa).

The N-terminal stretch at 1-20 (MAFHSLLLLCLAGLVFLSEA) is a signal peptide. Cys32 carries the post-translational modification Sulfocysteine. Position 37 (Lys37) interacts with L-thyroxine. Glu64 is modified (4-carboxyglutamate). The L-thyroxine site is built by Glu76 and Ser139.

It belongs to the transthyretin family. Homotetramer. Dimer of dimers. In the homotetramer, subunits assemble around a central channel that can accommodate two ligand molecules. Interacts with RBP4. Sulfonation of the reactive cysteine Cys-32 enhances the stability of the native conformation of TTR, avoiding misassembly of the protein leading to amyloid formation. In terms of tissue distribution, highly expressed in the choroid plexus.

It localises to the secreted. Thyroid hormone-binding protein. Probably transports thyroxine from the bloodstream to the brain. This Sminthopsis macroura (Stripe-faced dunnart) protein is Transthyretin (TTR).